We begin with the raw amino-acid sequence, 394 residues long: NAD(P)H-quinone oxidoreductase subunit H (394 aa).

It belongs to the complex I 49 kDa subunit family. In terms of assembly, NDH-1 can be composed of about 15 different subunits; different subcomplexes with different compositions have been identified which probably have different functions.

The protein localises to the cellular thylakoid membrane. The catalysed reaction is a plastoquinone + NADH + (n+1) H(+)(in) = a plastoquinol + NAD(+) + n H(+)(out). It carries out the reaction a plastoquinone + NADPH + (n+1) H(+)(in) = a plastoquinol + NADP(+) + n H(+)(out). Its function is as follows. NDH-1 shuttles electrons from an unknown electron donor, via FMN and iron-sulfur (Fe-S) centers, to quinones in the respiratory and/or the photosynthetic chain. The immediate electron acceptor for the enzyme in this species is believed to be plastoquinone. Couples the redox reaction to proton translocation, and thus conserves the redox energy in a proton gradient. Cyanobacterial NDH-1 also plays a role in inorganic carbon-concentration. The protein is NAD(P)H-quinone oxidoreductase subunit H of Synechococcus sp. (strain CC9902).